A 435-amino-acid chain; its full sequence is AP-2 complex subunit mu (435 aa).

A Phosphoserine modification is found at serine 45. Threonine 156 carries the phosphothreonine modification. An MHD domain is found at 170-434; it reads RNELFLDVLE…IGRSGIYETR (265 aa). A 1,2-diacyl-sn-glycero-3-phospho-(1D-myo-inositol-3,4,5-trisphosphate) is bound by residues lysine 341, lysine 345, and lysine 354.

Belongs to the adaptor complexes medium subunit family. In terms of assembly, adaptor protein complex 2 (AP-2) is a heterotetramer composed of two large adaptins (alpha-type subunit AP2A1 or AP2A2 and beta-type subunit AP2B1), a medium adaptin (mu-type subunit AP2M1) and a small adaptin (sigma-type subunit AP2S1). Interacts with ATP6V1H and MEGF10. Interacts with EGFR. Interacts with PIP5K1C; tyrosine phosphorylation of PIP5K1C weakens the interaction. Interacts with KIAA0319; required for clathrin-mediated endocytosis of KIAA0319. Interacts with DVL2 (via DEP domain). Interacts with KCNQ1; mediates estrogen-induced internalization via clathrin-coated vesicles. Together with AP2A1 or AP2A2 and AP2B1, it interacts with ADAM10; this interaction facilitates ADAM10 endocytosis from the plasma membrane during long-term potentiation in hippocampal neurons. Probably interacts with ACE2 (via endocytic sorting signal motif); the interaction is inhibited by ACE2 phosphorylation. Interacts with RALBP1; the interaction is direct. Interacts with TMEM106B (via N-terminus). Post-translationally, phosphorylation at Thr-156 increases the affinity of the AP-2 complex for cargo membrane proteins during the initial stages of endocytosis.

It is found in the cell membrane. The protein localises to the membrane. It localises to the coated pit. Functionally, component of the adaptor protein complex 2 (AP-2). Adaptor protein complexes function in protein transport via transport vesicles in different membrane traffic pathways. Adaptor protein complexes are vesicle coat components and appear to be involved in cargo selection and vesicle formation. AP-2 is involved in clathrin-dependent endocytosis in which cargo proteins are incorporated into vesicles surrounded by clathrin (clathrin-coated vesicles, CCVs) which are destined for fusion with the early endosome. The clathrin lattice serves as a mechanical scaffold but is itself unable to bind directly to membrane components. Clathrin-associated adaptor protein (AP) complexes which can bind directly to both the clathrin lattice and to the lipid and protein components of membranes are considered to be the major clathrin adaptors contributing the CCV formation. AP-2 also serves as a cargo receptor to selectively sort the membrane proteins involved in receptor-mediated endocytosis. AP-2 seems to play a role in the recycling of synaptic vesicle membranes from the presynaptic surface. AP-2 recognizes Y-X-X-[FILMV] (Y-X-X-Phi) and [ED]-X-X-X-L-[LI] endocytosis signal motifs within the cytosolic tails of transmembrane cargo molecules. AP-2 may also play a role in maintaining normal post-endocytic trafficking through the ARF6-regulated, non-clathrin pathway. During long-term potentiation in hippocampal neurons, AP-2 is responsible for the endocytosis of ADAM10. The AP-2 mu subunit binds to transmembrane cargo proteins; it recognizes the Y-X-X-Phi motifs. The surface region interacting with to the Y-X-X-Phi motif is inaccessible in cytosolic AP-2, but becomes accessible through a conformational change following phosphorylation of AP-2 mu subunit at Thr-156 in membrane-associated AP-2. The membrane-specific phosphorylation event appears to involve assembled clathrin which activates the AP-2 mu kinase AAK1. Plays a role in endocytosis of frizzled family members upon Wnt signaling. The sequence is that of AP-2 complex subunit mu (AP2M1) from Pongo abelii (Sumatran orangutan).